A 325-amino-acid polypeptide reads, in one-letter code: Pyruvate dehydrogenase E1 component subunit beta (325 aa).

E60 lines the thiamine diphosphate pocket.

As to quaternary structure, heterodimer of an alpha and a beta chain. Thiamine diphosphate serves as cofactor.

The enzyme catalyses N(6)-[(R)-lipoyl]-L-lysyl-[protein] + pyruvate + H(+) = N(6)-[(R)-S(8)-acetyldihydrolipoyl]-L-lysyl-[protein] + CO2. In terms of biological role, the pyruvate dehydrogenase complex catalyzes the overall conversion of pyruvate to acetyl-CoA and CO(2). It contains multiple copies of three enzymatic components: pyruvate dehydrogenase (E1), dihydrolipoamide acetyltransferase (E2) and lipoamide dehydrogenase (E3). This is Pyruvate dehydrogenase E1 component subunit beta (pdhB) from Staphylococcus aureus (strain COL).